A 103-amino-acid polypeptide reads, in one-letter code: Pterin-4-alpha-carbinolamine dehydratase 2 (103 aa).

This sequence belongs to the pterin-4-alpha-carbinolamine dehydratase family. Highest level found in the kidney, liver, heart and ovarian follicles.

The enzyme catalyses (4aS,6R)-4a-hydroxy-L-erythro-5,6,7,8-tetrahydrobiopterin = (6R)-L-erythro-6,7-dihydrobiopterin + H2O. In terms of biological role, involved in tetrahydrobiopterin biosynthesis. Seems to both prevent the formation of 7-pterins and accelerate the formation of quinonoid-BH2. Its function is as follows. Regulates the dimerization of homeodomain protein HNF-1-alpha and enhances its transcriptional activity. The protein is Pterin-4-alpha-carbinolamine dehydratase 2 (PCBD2) of Gallus gallus (Chicken).